A 241-amino-acid chain; its full sequence is Probable porphobilinogen deaminase (241 aa).

The protein belongs to the HMBS family.

The catalysed reaction is 4 porphobilinogen + H2O = hydroxymethylbilane + 4 NH4(+). The protein operates within porphyrin-containing compound metabolism; protoporphyrin-IX biosynthesis; coproporphyrinogen-III from 5-aminolevulinate: step 2/4. Functionally, tetrapolymerization of the monopyrrole PBG into the hydroxymethylbilane pre-uroporphyrinogen in several discrete steps. This chain is Probable porphobilinogen deaminase (hemC), found in Chlamydia trachomatis serovar D (strain ATCC VR-885 / DSM 19411 / UW-3/Cx).